Reading from the N-terminus, the 85-residue chain is MPQIKSAIKRVKTNATANKRNAAELSKLRTAVRKFNEAVENDAKDVLDLEVKAARALDKAASKGLISKNKANRDKSRLSKKAANK.

Belongs to the bacterial ribosomal protein bS20 family.

In terms of biological role, binds directly to 16S ribosomal RNA. The protein is Small ribosomal subunit protein bS20 of Lactobacillus johnsonii (strain CNCM I-12250 / La1 / NCC 533).